A 150-amino-acid chain; its full sequence is Peptide deformylase 2 (150 aa).

Cys89 and His131 together coordinate Fe cation. Residue Glu132 is part of the active site. A Fe cation-binding site is contributed by His135.

Belongs to the polypeptide deformylase family. Fe(2+) is required as a cofactor.

It catalyses the reaction N-terminal N-formyl-L-methionyl-[peptide] + H2O = N-terminal L-methionyl-[peptide] + formate. Removes the formyl group from the N-terminal Met of newly synthesized proteins. Requires at least a dipeptide for an efficient rate of reaction. N-terminal L-methionine is a prerequisite for activity but the enzyme has broad specificity at other positions. This Clostridium acetobutylicum (strain ATCC 824 / DSM 792 / JCM 1419 / IAM 19013 / LMG 5710 / NBRC 13948 / NRRL B-527 / VKM B-1787 / 2291 / W) protein is Peptide deformylase 2.